Here is a 473-residue protein sequence, read N- to C-terminus: MAP kinase-activated protein kinase 5 (473 aa).

Positions 22–304 (INWTQKLGAG…IEGVLDHPWL (283 aa)) constitute a Protein kinase domain. ATP contacts are provided by residues 28-36 (LGAGISGPV) and Lys51. The residue at position 115 (Ser115) is a Phosphoserine; by PKA. Asp148 (proton acceptor) is an active-site residue. Thr182 carries the post-translational modification Phosphothreonine; by MAPK11, MAPK14, MAPK4, MAPK6 and PKA. 2 positions are modified to phosphoserine: Ser212 and Ser354. The stretch at 409–440 (ENEDEKLNEVMQEAWKYNRECKLLRDTLQSFS) forms a coiled coil.

This sequence belongs to the protein kinase superfamily. CAMK Ser/Thr protein kinase family. Interacts with ERK3/MAPK6 and ERK4/MAPK4 (via FRIEDE motif); the interaction is direct. Interacts with YWHAE; the interaction prevents phosphorylation of HSP27/HSPB1 leading to disrupt F-actin polymerization. Interacts with SQSTM1. Post-translationally, phosphorylated on Thr-182 ERK3/MAPK6 or ERK4/MAPK4; which is the regulatory phosphorylation site and is located on the T-loop/loop 12, leading to activation. Phosphorylation at Thr-182 by p38-alpha/MAPK14, p38-beta/MAPK11 is subject to debate. Phosphorylated at Ser-115 by PKA/PRKACA, leading to localization to the cytoplasm. Autophosphorylated. In terms of tissue distribution, expressed ubiquitously.

The protein localises to the cytoplasm. The protein resides in the nucleus. It catalyses the reaction L-seryl-[protein] + ATP = O-phospho-L-seryl-[protein] + ADP + H(+). The catalysed reaction is L-threonyl-[protein] + ATP = O-phospho-L-threonyl-[protein] + ADP + H(+). With respect to regulation, activated following phosphorylation at Thr-182 by p38-alpha/MAPK14, p38-beta/MAPK11, ERK2/MAPK1, ERK3/MAPK6, and ERK4/MAPK4. Activated by stress-related extracellular stimuli; such as H(2)O(2), arsenite, anisomycin TNF alpha and also PMA and the calcium ionophore A23187; but to a lesser extent. In vitro, activated by SQSTM1. Inhibited by diterpenoid alkaloid noroxoaconitine. In terms of biological role, tumor suppressor serine/threonine-protein kinase involved in mTORC1 signaling and post-transcriptional regulation. Phosphorylates FOXO3, ERK3/MAPK6, ERK4/MAPK4, HSP27/HSPB1, p53/TP53 and RHEB. Acts as a tumor suppressor by mediating Ras-induced senescence and phosphorylating p53/TP53. Involved in post-transcriptional regulation of MYC by mediating phosphorylation of FOXO3: phosphorylation of FOXO3 leads to promote nuclear localization of FOXO3, enabling expression of miR-34b and miR-34c, 2 post-transcriptional regulators of MYC that bind to the 3'UTR of MYC transcript and prevent MYC translation. Acts as a negative regulator of mTORC1 signaling by mediating phosphorylation and inhibition of RHEB. Part of the atypical MAPK signaling via its interaction with ERK3/MAPK6 or ERK4/MAPK4: the precise role of the complex formed with ERK3/MAPK6 or ERK4/MAPK4 is still unclear, but the complex follows a complex set of phosphorylation events: upon interaction with atypical MAPK (ERK3/MAPK6 or ERK4/MAPK4), ERK3/MAPK6 (or ERK4/MAPK4) is phosphorylated and then mediates phosphorylation and activation of MAPKAPK5, which in turn phosphorylates ERK3/MAPK6 (or ERK4/MAPK4). Mediates phosphorylation of HSP27/HSPB1 in response to PKA/PRKACA stimulation, inducing F-actin rearrangement. The polypeptide is MAP kinase-activated protein kinase 5 (MAPKAPK5) (Homo sapiens (Human)).